The following is a 432-amino-acid chain: Glycosyltransferase 6 (432 aa).

The Cytoplasmic segment spans residues 1-18 (MGKPGGAKTRTAVCLSDG). The chain crosses the membrane as a helical; Signal-anchor for type II membrane protein span at residues 19–39 (VFFLAGAFMSLTLVWSYFSIF). Over 40 to 432 (SPSFTSLRHD…LPFDYPNEAW (393 aa)) the chain is Lumenal. The N-linked (GlcNAc...) asparagine glycan is linked to Asn315.

It belongs to the glycosyltransferase 34 family.

It is found in the golgi apparatus membrane. Functionally, probable glycosyltransferase that may be involved in the biosynthesis of xyloglucan. This Arabidopsis thaliana (Mouse-ear cress) protein is Glycosyltransferase 6 (GT6).